We begin with the raw amino-acid sequence, 101 residues long: Urease subunit beta (101 aa).

Belongs to the urease beta subunit family. Heterotrimer of UreA (gamma), UreB (beta) and UreC (alpha) subunits. Three heterotrimers associate to form the active enzyme.

The protein localises to the cytoplasm. It catalyses the reaction urea + 2 H2O + H(+) = hydrogencarbonate + 2 NH4(+). Its pathway is nitrogen metabolism; urea degradation; CO(2) and NH(3) from urea (urease route): step 1/1. The sequence is that of Urease subunit beta from Rhizobium meliloti (strain 1021) (Ensifer meliloti).